We begin with the raw amino-acid sequence, 333 residues long: Anthranilate phosphoribosyltransferase (333 aa).

5-phospho-alpha-D-ribose 1-diphosphate is bound by residues Gly-81, 84–85, Thr-89, 91–94, 109–117, and Ala-121; these read GN, NIST, and KHGNRSVSS. Gly-81 is an anthranilate binding site. Residue Ser-93 coordinates Mg(2+). Asn-112 contacts anthranilate. Arg-167 contacts anthranilate. Mg(2+) contacts are provided by Asp-225 and Glu-226.

It belongs to the anthranilate phosphoribosyltransferase family. In terms of assembly, homodimer. Mg(2+) serves as cofactor.

It carries out the reaction N-(5-phospho-beta-D-ribosyl)anthranilate + diphosphate = 5-phospho-alpha-D-ribose 1-diphosphate + anthranilate. The protein operates within amino-acid biosynthesis; L-tryptophan biosynthesis; L-tryptophan from chorismate: step 2/5. Catalyzes the transfer of the phosphoribosyl group of 5-phosphorylribose-1-pyrophosphate (PRPP) to anthranilate to yield N-(5'-phosphoribosyl)-anthranilate (PRA). This chain is Anthranilate phosphoribosyltransferase, found in Haemophilus influenzae (strain ATCC 51907 / DSM 11121 / KW20 / Rd).